Consider the following 158-residue polypeptide: 6,7-dimethyl-8-ribityllumazine synthase (158 aa).

5-amino-6-(D-ribitylamino)uracil contacts are provided by residues Phe-22, 57–59 (AFE), and 81–83 (AVI). 86 to 87 (GT) serves as a coordination point for (2S)-2-hydroxy-3-oxobutyl phosphate. His-89 (proton donor) is an active-site residue. Phe-114 is a 5-amino-6-(D-ribitylamino)uracil binding site. Arg-128 provides a ligand contact to (2S)-2-hydroxy-3-oxobutyl phosphate.

This sequence belongs to the DMRL synthase family. In terms of assembly, forms an icosahedral capsid composed of 60 subunits, arranged as a dodecamer of pentamers.

The enzyme catalyses (2S)-2-hydroxy-3-oxobutyl phosphate + 5-amino-6-(D-ribitylamino)uracil = 6,7-dimethyl-8-(1-D-ribityl)lumazine + phosphate + 2 H2O + H(+). The protein operates within cofactor biosynthesis; riboflavin biosynthesis; riboflavin from 2-hydroxy-3-oxobutyl phosphate and 5-amino-6-(D-ribitylamino)uracil: step 1/2. Catalyzes the formation of 6,7-dimethyl-8-ribityllumazine by condensation of 5-amino-6-(D-ribitylamino)uracil with 3,4-dihydroxy-2-butanone 4-phosphate. This is the penultimate step in the biosynthesis of riboflavin. This chain is 6,7-dimethyl-8-ribityllumazine synthase, found in Shewanella amazonensis (strain ATCC BAA-1098 / SB2B).